Here is a 148-residue protein sequence, read N- to C-terminus: Putative pre-16S rRNA nuclease (148 aa).

Belongs to the YqgF nuclease family.

The protein localises to the cytoplasm. Its function is as follows. Could be a nuclease involved in processing of the 5'-end of pre-16S rRNA. This is Putative pre-16S rRNA nuclease from Chromohalobacter salexigens (strain ATCC BAA-138 / DSM 3043 / CIP 106854 / NCIMB 13768 / 1H11).